The sequence spans 239 residues: Proteasome subunit beta type-6 (239 aa).

The residue at position 2 (alanine 2) is an N-acetylalanine. A propeptide spans 2–34 (AATLLAARGAGPAPAWGPEAFTPDWESREVSTG) (removed in mature form). Threonine 35 acts as the Nucleophile in catalysis. Threonine 69 is modified (phosphothreonine).

It belongs to the peptidase T1B family. The 26S proteasome consists of a 20S proteasome core and two 19S regulatory subunits. The 20S proteasome core is a barrel-shaped complex made of 28 subunits that are arranged in four stacked rings. The two outer rings are each formed by seven alpha subunits, and the two inner rings are formed by seven beta subunits. The proteolytic activity is exerted by three beta-subunits PSMB5, PSMB6 and PSMB7. As to quaternary structure, (Microbial infection) Interacts with HIV-1 protein Tat.

The protein resides in the cytoplasm. Its subcellular location is the nucleus. It carries out the reaction Cleavage of peptide bonds with very broad specificity.. Its function is as follows. Component of the 20S core proteasome complex involved in the proteolytic degradation of most intracellular proteins. This complex plays numerous essential roles within the cell by associating with different regulatory particles. Associated with two 19S regulatory particles, forms the 26S proteasome and thus participates in the ATP-dependent degradation of ubiquitinated proteins. The 26S proteasome plays a key role in the maintenance of protein homeostasis by removing misfolded or damaged proteins that could impair cellular functions, and by removing proteins whose functions are no longer required. Associated with the PA200 or PA28, the 20S proteasome mediates ubiquitin-independent protein degradation. This type of proteolysis is required in several pathways including spermatogenesis (20S-PA200 complex) or generation of a subset of MHC class I-presented antigenic peptides (20S-PA28 complex). Within the 20S core complex, PSMB6 displays a peptidylglutamyl-hydrolizing activity also termed postacidic or caspase-like activity, meaning that the peptides bond hydrolysis occurs directly after acidic residues. The chain is Proteasome subunit beta type-6 from Homo sapiens (Human).